A 357-amino-acid chain; its full sequence is Serpentine receptor class epsilon-30 (357 aa).

Transmembrane regions (helical) follow at residues 31 to 51 (IFEL…IFVM), 61 to 81 (LMFL…GKFI), 121 to 141 (LLIF…FGIL), 165 to 185 (IPII…LAII), 192 to 212 (FLAR…FLFI), 253 to 273 (LVVV…ALTF), and 283 to 303 (LIEN…MFSI).

It belongs to the nematode receptor-like protein sre family.

It is found in the membrane. The protein is Serpentine receptor class epsilon-30 (sre-30) of Caenorhabditis elegans.